Here is a 573-residue protein sequence, read N- to C-terminus: O-fucosyltransferase 20 (573 aa).

The Cytoplasmic segment spans residues 1-60 (MALSKNSNSNSFNKKKVSYISVPSQIINSLSSSSLQSLLVSPKKSSRSTNRFSFSYRNPR). Residues 61–81 (IWFFTLFLVSLFGMLKLGFNV) traverse the membrane as a helical; Signal-anchor for type II membrane protein segment. The Lumenal portion of the chain corresponds to 82–573 (DPISLPFSRY…RQQQEQQSDA (492 aa)). Residue asparagine 138 is glycosylated (N-linked (GlcNAc...) asparagine). Residue 344 to 346 (HLR) participates in substrate binding. 2 N-linked (GlcNAc...) asparagine glycosylation sites follow: asparagine 385 and asparagine 517. Positions 547–556 (AGKDVTKHPV) are enriched in basic and acidic residues. The disordered stretch occupies residues 547–573 (AGKDVTKHPVPECMCSDRQQQEQQSDA). The segment covering 563 to 573 (DRQQQEQQSDA) has biased composition (polar residues).

The protein belongs to the glycosyltransferase GT106 family. Interacts with RACK1A. As to expression, highly expressed in shoot apical meristem (SAM) and in young vegetative tissues.

The protein resides in the golgi apparatus membrane. Its pathway is glycan metabolism. Functionally, may play a role in the biosynthesis of matrix polysaccharides and contribute to the biomechanics and development of the plant cell wall. This Arabidopsis thaliana (Mouse-ear cress) protein is O-fucosyltransferase 20.